A 153-amino-acid chain; its full sequence is Transcriptional repressor NrdR (153 aa).

Residues 3 to 34 (CPFCGHLEDRVIDSRAGGAGEVIRRRRECASC) fold into a zinc finger. The region spanning 49-139 (PTVVKKDGRR…VYRSFRDIDQ (91 aa)) is the ATP-cone domain.

The protein belongs to the NrdR family. Requires Zn(2+) as cofactor.

Functionally, negatively regulates transcription of bacterial ribonucleotide reductase nrd genes and operons by binding to NrdR-boxes. This chain is Transcriptional repressor NrdR, found in Sorangium cellulosum (strain So ce56) (Polyangium cellulosum (strain So ce56)).